We begin with the raw amino-acid sequence, 97 residues long: Essential MCU regulator, mitochondrial (97 aa).

The transit peptide at 1–35 (MIVPRLALPISLALQRVSRRVAEHPHNLRILQRHM) directs the protein to the mitochondrion. The chain crosses the membrane as a helical span at residues 53–73 (PFGLLAIFCAVIPGLFVGATI).

Belongs to the SMDT1/EMRE family.

Its subcellular location is the mitochondrion inner membrane. In terms of biological role, essential regulatory subunit of the mitochondrial calcium uniporter MCU channel, a protein that mediates calcium uptake into mitochondria. The sequence is that of Essential MCU regulator, mitochondrial from Drosophila melanogaster (Fruit fly).